The chain runs to 446 residues: Phosphoglucosamine mutase (446 aa).

Ser102 (phosphoserine intermediate) is an active-site residue. 4 residues coordinate Mg(2+): Ser102, Asp241, Asp243, and Asp245. Position 102 is a phosphoserine (Ser102).

It belongs to the phosphohexose mutase family. Mg(2+) serves as cofactor. Post-translationally, activated by phosphorylation.

The catalysed reaction is alpha-D-glucosamine 1-phosphate = D-glucosamine 6-phosphate. Its function is as follows. Catalyzes the conversion of glucosamine-6-phosphate to glucosamine-1-phosphate. In Xylella fastidiosa (strain M12), this protein is Phosphoglucosamine mutase.